We begin with the raw amino-acid sequence, 372 residues long: N-methyl-L-tryptophan oxidase (372 aa).

4–34 provides a ligand contact to FAD; that stretch reads DLIIIGSGSVGAAAGYYATRAGLNVLMTDAH. Cys308 is subject to S-8alpha-FAD cysteine.

It belongs to the MSOX/MTOX family. MTOX subfamily. In terms of assembly, monomer. FAD serves as cofactor.

It catalyses the reaction N(alpha)-methyl-L-tryptophan + O2 + H2O = L-tryptophan + formaldehyde + H2O2. In terms of biological role, catalyzes the oxidative demethylation of N-methyl-L-tryptophan. The protein is N-methyl-L-tryptophan oxidase of Escherichia coli O139:H28 (strain E24377A / ETEC).